The primary structure comprises 533 residues: Retinoid isomerohydrolase (533 aa).

Cys-112 carries S-palmitoyl cysteine; in membrane form lipidation. A Phosphoserine modification is found at Ser-117. His-180 contacts Fe cation. Residue Cys-231 is the site of S-palmitoyl cysteine; in membrane form attachment. Positions 241 and 313 each coordinate Fe cation. A lipid anchor (S-palmitoyl cysteine; in membrane form) is attached at Cys-329. His-527 serves as a coordination point for Fe cation.

The protein belongs to the carotenoid oxygenase family. It depends on Fe(2+) as a cofactor. In terms of processing, palmitoylation by LRAT regulates ligand binding specificity; the palmitoylated form (membrane form) specifically binds all-trans-retinyl-palmitate, while the soluble unpalmitoylated form binds all-trans-retinol (vitamin A). Retinal pigment epithelium specific.

The protein localises to the cytoplasm. The protein resides in the cell membrane. Its subcellular location is the microsome membrane. It catalyses the reaction an all-trans-retinyl ester + H2O = 11-cis-retinol + a fatty acid + H(+). The enzyme catalyses lutein = (3R,3'S)-zeaxanthin. The catalysed reaction is all-trans-retinyl hexadecanoate + H2O = 11-cis-retinol + hexadecanoate + H(+). In terms of biological role, critical isomerohydrolase in the retinoid cycle involved in regeneration of 11-cis-retinal, the chromophore of rod and cone opsins. Catalyzes the cleavage and isomerization of all-trans-retinyl fatty acid esters to 11-cis-retinol which is further oxidized by 11-cis retinol dehydrogenase to 11-cis-retinal for use as visual chromophore. Essential for the production of 11-cis retinal for both rod and cone photoreceptors. Also capable of catalyzing the isomerization of lutein to meso-zeaxanthin an eye-specific carotenoid. The soluble form binds vitamin A (all-trans-retinol), making it available for LRAT processing to all-trans-retinyl ester. The membrane form, palmitoylated by LRAT, binds all-trans-retinyl esters, making them available for IMH (isomerohydrolase) processing to all-cis-retinol. The soluble form is regenerated by transferring its palmitoyl groups onto 11-cis-retinol, a reaction catalyzed by LRAT. The polypeptide is Retinoid isomerohydrolase (RPE65) (Gallus gallus (Chicken)).